Here is an 88-residue protein sequence, read N- to C-terminus: DNA-directed RNA polymerase subunit omega (88 aa).

Belongs to the RNA polymerase subunit omega family. In terms of assembly, the RNAP catalytic core consists of 2 alpha, 1 beta, 1 beta' and 1 omega subunit. When a sigma factor is associated with the core the holoenzyme is formed, which can initiate transcription.

It catalyses the reaction RNA(n) + a ribonucleoside 5'-triphosphate = RNA(n+1) + diphosphate. Functionally, promotes RNA polymerase assembly. Latches the N- and C-terminal regions of the beta' subunit thereby facilitating its interaction with the beta and alpha subunits. The polypeptide is DNA-directed RNA polymerase subunit omega (Anaeromyxobacter dehalogenans (strain 2CP-1 / ATCC BAA-258)).